The following is a 362-amino-acid chain: Dihydroorotate dehydrogenase (quinone) (362 aa).

FMN-binding positions include 62-66 (AGYDK) and Thr-86. Lys-66 is a binding site for substrate. Substrate is bound at residue 111-115 (NRLGF). FMN-binding residues include Asn-139 and Asn-170. Asn-170 lines the substrate pocket. Catalysis depends on Ser-173, which acts as the Nucleophile. Substrate is bound at residue Asn-175. FMN is bound by residues Lys-215 and Ser-243. 244–245 (NT) provides a ligand contact to substrate. FMN contacts are provided by residues Gly-266, Gly-295, and 316 to 317 (YS).

The protein belongs to the dihydroorotate dehydrogenase family. Type 2 subfamily. As to quaternary structure, monomer. Requires FMN as cofactor.

It localises to the cell membrane. The catalysed reaction is (S)-dihydroorotate + a quinone = orotate + a quinol. Its pathway is pyrimidine metabolism; UMP biosynthesis via de novo pathway; orotate from (S)-dihydroorotate (quinone route): step 1/1. Functionally, catalyzes the conversion of dihydroorotate to orotate with quinone as electron acceptor. This Rhizobium etli (strain ATCC 51251 / DSM 11541 / JCM 21823 / NBRC 15573 / CFN 42) protein is Dihydroorotate dehydrogenase (quinone).